Consider the following 262-residue polypeptide: Large ribosomal subunit protein uL10m (262 aa).

The transit peptide at 1–28 (MAAAVAGILRGGLPPRAAWLPTLQTVRH) directs the protein to the mitochondrion. Residues 243–262 (GDCATSANEKLHPPDPAPDA) form a disordered region.

Belongs to the universal ribosomal protein uL10 family. Component of the mitochondrial ribosome large subunit (39S) which comprises a 16S rRNA and about 50 distinct proteins.

The protein resides in the mitochondrion. In Mus musculus (Mouse), this protein is Large ribosomal subunit protein uL10m (Mrpl10).